The sequence spans 136 residues: Psoriasis susceptibility 1 candidate gene 2 protein (136 aa).

A signal peptide spans 1–22 (MILNWKLLGILVLCLHTRGISG). The segment at 20-136 (ISGSEGHPSH…DLDPPREEYR (117 aa)) is disordered. 2 stretches are compositionally biased toward pro residues: residues 44-69 (PQGP…PTRP) and 84-116 (PEPP…PPAP). Over residues 118 to 136 (VDNRPQEEPDLDPPREEYR) the composition is skewed to basic and acidic residues.

In terms of tissue distribution, expressed in skin. Also expressed in heart and skeletal muscle.

It is found in the secreted. This is Psoriasis susceptibility 1 candidate gene 2 protein (PSORS1C2) from Homo sapiens (Human).